Here is a 1557-residue protein sequence, read N- to C-terminus: Probable kinase PglW (1557 aa).

Residues 12–130 (SEFEHERRGL…VAEAVCFTDN (119 aa)) enclose the NERD domain. 2 Protein kinase domains span residues 195-490 (ELER…LEVV) and 530-816 (WEVR…KVFL). ATP contacts are provided by residues 536 to 544 (LGTGSTSRA) and Lys-564. Disordered stretches follow at residues 615 to 634 (DERD…RRRE) and 821 to 861 (TVPS…QRDR). Over residues 830-849 (PAAPADGAAPAEGAAAGIAD) the composition is skewed to low complexity.

The protein belongs to the protein kinase superfamily. Ser/Thr protein kinase family.

Functionally, BREX systems (bacteriophage exclusion) provide immunity against bacteriophage. Part of a type 2 BREX system. Previously called the phage growth limitation (Pgl) system, it confers protection against bacteriophage phiC31. The bacteria allows one cycle of phage infection, but subsequent cycles are impaired, protecting the original bacterial colony. The system undergoes high rates (10(-3) to 10(-4)) of phase reversion, i.e. loss and regain of phiC31 resistance. When the pglW-pglX-pglY-pglZ genes are transformed into a susceptible S.lividans (strain 1326) they confer resistance to infection by phage phiC31 and phiBT1; all 4 genes are necessary. The proteins has kinase domains and might bind DNA. In terms of biological role, autophosphorylates when synthesized in vitro, cannot be expressed in E.coli. In Streptomyces coelicolor (strain ATCC BAA-471 / A3(2) / M145), this protein is Probable kinase PglW.